A 362-amino-acid chain; its full sequence is Mannose-1-phosphate guanyltransferase (362 aa).

Belongs to the transferase hexapeptide repeat family.

The protein localises to the cytoplasm. The catalysed reaction is alpha-D-mannose 1-phosphate + GTP + H(+) = GDP-alpha-D-mannose + diphosphate. Its pathway is nucleotide-sugar biosynthesis; GDP-alpha-D-mannose biosynthesis; GDP-alpha-D-mannose from alpha-D-mannose 1-phosphate (GTP route): step 1/1. Involved in cell wall synthesis where it is required for glycosylation. Involved in cell cycle progression through cell-size checkpoint. In Candida albicans (strain SC5314 / ATCC MYA-2876) (Yeast), this protein is Mannose-1-phosphate guanyltransferase (MPG1).